Here is a 238-residue protein sequence, read N- to C-terminus: Sugar fermentation stimulation protein homolog (238 aa).

It belongs to the SfsA family.

The polypeptide is Sugar fermentation stimulation protein homolog (Alteromonas mediterranea (strain DSM 17117 / CIP 110805 / LMG 28347 / Deep ecotype)).